We begin with the raw amino-acid sequence, 114 residues long: UPF0145 protein PYRAB04900 (114 aa).

This sequence belongs to the UPF0145 family.

This chain is UPF0145 protein PYRAB04900, found in Pyrococcus abyssi (strain GE5 / Orsay).